The chain runs to 580 residues: MTDTFSFNVNSDDLQKRSDHIKMGIHQAPARSLLYATGQVSNPEDMKKPFIAICNSYVEIIPGHVHLRELADVAKQAIRDAGGIPFEFNTIGVDDGIAMGHLGMRYSLPSRELIADSAETVITAHWFDGVFFLPNCDKITPGMIMASLRCNVPSVFVSGGPMKAGLDPQGKATTLSSMFEAVGAFKSGLMTEEEFLEMEQNACPTCGSCAGMFTANSMNTLMEVMGIALPFNGTALAISDERRDLIRDGAKQLMRMVKENVKPRDLITKEALDDAMALDMAMGGSTNTVLHVLSIAHEAGIDYDQADINEIAKKVPYLSKIAPSSKWAMEDVHNAGGVPAIINELIRMGDVLHPDRMTVTGKTLRENVADHEIINDEIIRKFDVNPYSKQGGLSILYGNLAPKGSVIKAGGVDPSIKDFTGEAIVFNSEQEAVEAIDSGQIHAGHVLIIRYEGPKGGPGMPEMLGPTSAITGMGLGKEVALVTDGRFSGASRGISVGHVSPEAADDGPIALVENGDKITIDLVNRTMHLHVDDTELAERHEHLKPFVPKMRNGWMARYQALVTSANTGGVLKGADELFPS.

Aspartate 95 serves as a coordination point for Mg(2+). Cysteine 136 contributes to the [2Fe-2S] cluster binding site. The Mg(2+) site is built by aspartate 137 and lysine 138. N6-carboxylysine is present on lysine 138. Cysteine 209 is a [2Fe-2S] cluster binding site. Glutamate 462 lines the Mg(2+) pocket. Serine 488 serves as the catalytic Proton acceptor.

It belongs to the IlvD/Edd family. As to quaternary structure, homodimer. [2Fe-2S] cluster is required as a cofactor. The cofactor is Mg(2+).

It catalyses the reaction (2R)-2,3-dihydroxy-3-methylbutanoate = 3-methyl-2-oxobutanoate + H2O. It carries out the reaction (2R,3R)-2,3-dihydroxy-3-methylpentanoate = (S)-3-methyl-2-oxopentanoate + H2O. It functions in the pathway amino-acid biosynthesis; L-isoleucine biosynthesis; L-isoleucine from 2-oxobutanoate: step 3/4. The protein operates within amino-acid biosynthesis; L-valine biosynthesis; L-valine from pyruvate: step 3/4. Its function is as follows. Functions in the biosynthesis of branched-chain amino acids. Catalyzes the dehydration of (2R,3R)-2,3-dihydroxy-3-methylpentanoate (2,3-dihydroxy-3-methylvalerate) into 2-oxo-3-methylpentanoate (2-oxo-3-methylvalerate) and of (2R)-2,3-dihydroxy-3-methylbutanoate (2,3-dihydroxyisovalerate) into 2-oxo-3-methylbutanoate (2-oxoisovalerate), the penultimate precursor to L-isoleucine and L-valine, respectively. This is Dihydroxy-acid dehydratase from Leuconostoc mesenteroides subsp. mesenteroides (strain ATCC 8293 / DSM 20343 / BCRC 11652 / CCM 1803 / JCM 6124 / NCDO 523 / NBRC 100496 / NCIMB 8023 / NCTC 12954 / NRRL B-1118 / 37Y).